The sequence spans 692 residues: Acyl-coenzyme A oxidase 2, peroxisomal (692 aa).

A peroxisome-targeting transit peptide spans 1-49 (MESRREKNPMTEEESDGLIAARRIQRLSLHLSPSLTPSPSLPLVQTETC). T186, S192, G225, R365, Q384, G452, and T473 together coordinate FAD. Catalysis depends on E475, which acts as the Proton acceptor. D477 serves as a coordination point for FAD.

The protein belongs to the acyl-CoA oxidase family. Homodimer. FAD is required as a cofactor. Expressed mainly in flowers and young seedlings. Lower expression in roots, leaves and bracts.

It localises to the peroxisome. The catalysed reaction is a 2,3-saturated acyl-CoA + O2 = a (2E)-enoyl-CoA + H2O2. Catalyzes the desaturation of long-chain acyl-CoAs to 2-trans-enoyl-CoAs. Active on substrates longer than C14 and mostly with C18-CoA. Activity on long-chain mono-unsaturated substrates is double than with the corresponding saturated substrates. This chain is Acyl-coenzyme A oxidase 2, peroxisomal, found in Arabidopsis thaliana (Mouse-ear cress).